A 189-amino-acid polypeptide reads, in one-letter code: Elongation factor P (189 aa).

It belongs to the elongation factor P family.

The protein localises to the cytoplasm. It participates in protein biosynthesis; polypeptide chain elongation. Involved in peptide bond synthesis. Stimulates efficient translation and peptide-bond synthesis on native or reconstituted 70S ribosomes in vitro. Probably functions indirectly by altering the affinity of the ribosome for aminoacyl-tRNA, thus increasing their reactivity as acceptors for peptidyl transferase. This is Elongation factor P from Ehrlichia ruminantium (strain Gardel).